A 437-amino-acid polypeptide reads, in one-letter code: Trigger factor (437 aa).

The region spanning Gly-161–Pro-246 is the PPIase FKBP-type domain.

The protein belongs to the FKBP-type PPIase family. Tig subfamily.

It is found in the cytoplasm. The enzyme catalyses [protein]-peptidylproline (omega=180) = [protein]-peptidylproline (omega=0). Functionally, involved in protein export. Acts as a chaperone by maintaining the newly synthesized protein in an open conformation. Functions as a peptidyl-prolyl cis-trans isomerase. The sequence is that of Trigger factor from Alcanivorax borkumensis (strain ATCC 700651 / DSM 11573 / NCIMB 13689 / SK2).